Reading from the N-terminus, the 294-residue chain is Putative glucose-6-phosphate 1-epimerase (294 aa).

Residues arginine 74 and arginine 99 each coordinate substrate. Histidine 164 is a catalytic residue. A substrate-binding site is contributed by aspartate 208. Residue glutamate 267 is part of the active site.

This sequence belongs to the glucose-6-phosphate 1-epimerase family. In terms of assembly, monomer in solution.

It catalyses the reaction alpha-D-glucose 6-phosphate = beta-D-glucose 6-phosphate. The protein is Putative glucose-6-phosphate 1-epimerase (yeaD) of Escherichia coli (strain K12).